The chain runs to 189 residues: Peptidyl-tRNA hydrolase (189 aa).

Residue Tyr15 participates in tRNA binding. His20 acts as the Proton acceptor in catalysis. Positions 66, 68, and 114 each coordinate tRNA.

Belongs to the PTH family. As to quaternary structure, monomer.

It localises to the cytoplasm. The catalysed reaction is an N-acyl-L-alpha-aminoacyl-tRNA + H2O = an N-acyl-L-amino acid + a tRNA + H(+). Hydrolyzes ribosome-free peptidyl-tRNAs (with 1 or more amino acids incorporated), which drop off the ribosome during protein synthesis, or as a result of ribosome stalling. Its function is as follows. Catalyzes the release of premature peptidyl moieties from peptidyl-tRNA molecules trapped in stalled 50S ribosomal subunits, and thus maintains levels of free tRNAs and 50S ribosomes. This Streptococcus equi subsp. zooepidemicus (strain MGCS10565) protein is Peptidyl-tRNA hydrolase.